The sequence spans 478 residues: Probable glucan endo-1,3-beta-glucosidase A6 (478 aa).

A signal peptide spans 1 to 20 (MSLLAFFLFTILVFSSSCCS). The Proton donor role is filled by E135. E280 functions as the Nucleophile in the catalytic mechanism. The cysteines at positions 390 and 453 are disulfide-linked.

Belongs to the glycosyl hydrolase 17 family. Post-translationally, contains two additional disulfide bonds, but it is unclear if they are between the pairs Cys-409-Cys-416 and Cys-425-Cys-471 or between the pairs Cys-409-Cys-471 and Cys-416-Cys-425. Anthers.

The catalysed reaction is Hydrolysis of (1-&gt;3)-beta-D-glucosidic linkages in (1-&gt;3)-beta-D-glucans.. Functionally, probable beta-1,3-glucanase that may be involved in the degradation of callose walls around the microspore tetrad during pollen development. May be required for pollen exine formation. This chain is Probable glucan endo-1,3-beta-glucosidase A6, found in Arabidopsis thaliana (Mouse-ear cress).